A 146-amino-acid polypeptide reads, in one-letter code: uncharacterized protein (146 aa).

One can recognise a Toprim domain in the interval 31–119; the sequence is EKVMIVEGKS…RAYKEVAAAP (89 aa).

This is an uncharacterized protein from Bacillus subtilis (strain 168).